The following is a 71-amino-acid chain: DNA-directed RNA polymerase subunit Rpo10 (71 aa).

4 residues coordinate Zn(2+): Cys-6, Cys-9, Cys-52, and Cys-53.

This sequence belongs to the archaeal Rpo10/eukaryotic RPB10 RNA polymerase subunit family. As to quaternary structure, part of the RNA polymerase complex. Zn(2+) is required as a cofactor.

Its subcellular location is the cytoplasm. It catalyses the reaction RNA(n) + a ribonucleoside 5'-triphosphate = RNA(n+1) + diphosphate. Its function is as follows. DNA-dependent RNA polymerase (RNAP) catalyzes the transcription of DNA into RNA using the four ribonucleoside triphosphates as substrates. This is DNA-directed RNA polymerase subunit Rpo10 from Methanocella arvoryzae (strain DSM 22066 / NBRC 105507 / MRE50).